The primary structure comprises 341 residues: Heat-inducible transcription repressor HrcA (341 aa).

The protein belongs to the HrcA family.

Its function is as follows. Negative regulator of class I heat shock genes (grpE-dnaK-dnaJ and groELS operons). Prevents heat-shock induction of these operons. The chain is Heat-inducible transcription repressor HrcA from Leptothrix cholodnii (strain ATCC 51168 / LMG 8142 / SP-6) (Leptothrix discophora (strain SP-6)).